The chain runs to 74 residues: Protein kish-B (74 aa).

An N-terminal signal peptide occupies residues 1-22 (MTNVYSLDGILVFGLLFVCTCA). The Extracellular portion of the chain corresponds to 23-52 (YFKKVPRLKTWLLSEKKGVWGVFYKAAVIG). Residues 53–73 (TRLHAAVAIACIVMAFYVLFI) form a helical membrane-spanning segment. K74 is a topological domain (cytoplasmic).

The protein belongs to the KISH family.

It is found in the golgi apparatus membrane. In terms of biological role, involved in the early part of the secretory pathway. This chain is Protein kish-B (TMEM167B), found in Bos taurus (Bovine).